The sequence spans 246 residues: Carboxymethylenebutenolidase homolog (246 aa).

Residues Cys132, Asp179, and His212 contribute to the active site.

The protein belongs to the dienelactone hydrolase family.

The protein resides in the cytoplasm. Its subcellular location is the cytosol. Functionally, cysteine hydrolase. This is Carboxymethylenebutenolidase homolog (cmbl) from Xenopus tropicalis (Western clawed frog).